The primary structure comprises 784 residues: DNA ligase (784 aa).

NAD(+)-binding positions include Asp31–Asp35, Ser80–Leu81, and Glu120. Residue Lys122 is the N6-AMP-lysine intermediate of the active site. Residues Arg143, Glu180, Lys296, and Lys320 each coordinate NAD(+). Residues Cys414, Cys417, Cys444, and Cys450 each contribute to the Zn(2+) site. Residues Ala701–Leu784 form the BRCT domain.

The protein belongs to the NAD-dependent DNA ligase family. LigA subfamily. The cofactor is Mg(2+). Requires Mn(2+) as cofactor.

The enzyme catalyses NAD(+) + (deoxyribonucleotide)n-3'-hydroxyl + 5'-phospho-(deoxyribonucleotide)m = (deoxyribonucleotide)n+m + AMP + beta-nicotinamide D-nucleotide.. DNA ligase that catalyzes the formation of phosphodiester linkages between 5'-phosphoryl and 3'-hydroxyl groups in double-stranded DNA using NAD as a coenzyme and as the energy source for the reaction. It is essential for DNA replication and repair of damaged DNA. The sequence is that of DNA ligase from Pseudomonas entomophila (strain L48).